Here is a 591-residue protein sequence, read N- to C-terminus: Splicing factor U2af large subunit A (591 aa).

The disordered stretch occupies residues 1 to 215 (MAEHDAPPES…QSKRMSGFDQ (215 aa)). Residues 27–36 (SPQQDAQPLS) are compositionally biased toward polar residues. Basic and acidic residues-rich tracts occupy residues 37-79 (SRDR…SRDR) and 157-191 (RERS…DRDG). RRM domains lie at 272–355 (RRVY…RPTD) and 392–470 (DRIF…RANQ).

It belongs to the splicing factor SR family.

It is found in the nucleus. In terms of biological role, necessary for the splicing of pre-mRNA. In Triticum aestivum (Wheat), this protein is Splicing factor U2af large subunit A (U2AF65A).